A 379-amino-acid chain; its full sequence is Inactive deoxyhypusine synthase (379 aa).

Residues 1-48 (MLASVPAPRPAKKDSAASRRKSASKSTGAAVKDGSSARVSASGAAESP) form a disordered region. The span at 36–47 (SARVSASGAAES) shows a compositional bias: low complexity. NAD(+) contacts are provided by residues 115–119 (SNMIS), 141–143 (SAG), Glu-147, and Asp-256. 146–147 (EE) lines the spermidine pocket. Asp-261 serves as a coordination point for spermidine. Position 302 (Gly-302) interacts with NAD(+). His-307 is a binding site for spermidine. An NAD(+)-binding site is contributed by 323–324 (TG). Spermidine-binding positions include 329–331 (GCV) and 338–344 (DDVACGL). 357–358 (DA) contributes to the NAD(+) binding site.

Belongs to the deoxyhypusine synthase family.

In Leishmania donovani, this protein is Inactive deoxyhypusine synthase.